We begin with the raw amino-acid sequence, 90 residues long: Putative membrane protein insertion efficiency factor (90 aa).

Positions 68 to 90 are disordered; the sequence is VPAHFSLRRNPQYKEEDHRGKKR. The span at 79 to 90 shows a compositional bias: basic and acidic residues; it reads QYKEEDHRGKKR.

The protein belongs to the UPF0161 family.

It localises to the cell membrane. Could be involved in insertion of integral membrane proteins into the membrane. The protein is Putative membrane protein insertion efficiency factor of Lactiplantibacillus plantarum (strain ATCC BAA-793 / NCIMB 8826 / WCFS1) (Lactobacillus plantarum).